The chain runs to 70 residues: DNA-directed RNA polymerase subunit omega (70 aa).

This sequence belongs to the RNA polymerase subunit omega family. In terms of assembly, the RNAP catalytic core consists of 2 alpha, 1 beta, 1 beta' and 1 omega subunit. When a sigma factor is associated with the core the holoenzyme is formed, which can initiate transcription.

The catalysed reaction is RNA(n) + a ribonucleoside 5'-triphosphate = RNA(n+1) + diphosphate. Its function is as follows. Promotes RNA polymerase assembly. Latches the N- and C-terminal regions of the beta' subunit thereby facilitating its interaction with the beta and alpha subunits. The chain is DNA-directed RNA polymerase subunit omega from Staphylococcus saprophyticus subsp. saprophyticus (strain ATCC 15305 / DSM 20229 / NCIMB 8711 / NCTC 7292 / S-41).